The primary structure comprises 480 residues: MPLRVYNTLTGSKEEFVPINPGKVGMYVCGVTVYDHCHIGHARANVVFDMIYRHLLSKGLEVTYVRNYTDIDDKIINRANRDGVAYNEISERFIKEFDNDMARLMLQLPTFQPKATEHIPEIINLVQKLIDKGFAYQSGSDVFYRVDRFEGYLKLSKRNLEDMQAGARIDVDERKEHPMDFALWKGAKPGEPYWESPWGQGRPGWHIECSAMSTKFLGETLDIHGGGKDLIFPHHENEIAQSEAASGKPFVKYWLHNGFVNINSEKMSKSLGNFFTIKEILESYDAEVLRFFLLSAHYRSPIDFSDQNLKEAELGLERIYKALAGIDERLASGAHTPADADNTEFAEKVAGFAGRFGDAMDDDFNTALALGHLFDLVRVINRELPTASTGLLEKVKAEVAKMAAVLGICDSVPAAFLQRMKDRKTSDMEMSAEEIETLIAERAEARKAKNFKRGDEIRDLLLEKNIVLLDSAQGTTWKVK.

Position 29 (Cys29) interacts with Zn(2+). A 'HIGH' region motif is present at residues 31–41 (VTVYDHCHIGH). Zn(2+)-binding residues include Cys209, His234, and Glu238. The 'KMSKS' region motif lies at 266–270 (KMSKS). Residue Lys269 coordinates ATP.

The protein belongs to the class-I aminoacyl-tRNA synthetase family. Monomer. It depends on Zn(2+) as a cofactor.

Its subcellular location is the cytoplasm. It catalyses the reaction tRNA(Cys) + L-cysteine + ATP = L-cysteinyl-tRNA(Cys) + AMP + diphosphate. This chain is Cysteine--tRNA ligase, found in Geobacter sp. (strain M21).